The chain runs to 256 residues: Probable ABC transporter ATP-binding protein SPy_0285/M5005_Spy0242 (256 aa).

Positions 4–246 (LEINNLHVSI…EKEGYAGIAQ (243 aa)) constitute an ABC transporter domain. 36–43 (GPNGTGKS) provides a ligand contact to ATP.

Belongs to the ABC transporter superfamily. Ycf16 family.

The protein localises to the cell membrane. The chain is Probable ABC transporter ATP-binding protein SPy_0285/M5005_Spy0242 from Streptococcus pyogenes serotype M1.